Reading from the N-terminus, the 88-residue chain is UPF0297 protein SPCG_0205 (88 aa).

Belongs to the UPF0297 family.

This Streptococcus pneumoniae (strain CGSP14) protein is UPF0297 protein SPCG_0205.